Here is a 333-residue protein sequence, read N- to C-terminus: Tetraacyldisaccharide 4'-kinase (333 aa).

Residue 60 to 67 (TVGGTGKT) participates in ATP binding.

This sequence belongs to the LpxK family.

The enzyme catalyses a lipid A disaccharide + ATP = a lipid IVA + ADP + H(+). The protein operates within glycolipid biosynthesis; lipid IV(A) biosynthesis; lipid IV(A) from (3R)-3-hydroxytetradecanoyl-[acyl-carrier-protein] and UDP-N-acetyl-alpha-D-glucosamine: step 6/6. Functionally, transfers the gamma-phosphate of ATP to the 4'-position of a tetraacyldisaccharide 1-phosphate intermediate (termed DS-1-P) to form tetraacyldisaccharide 1,4'-bis-phosphate (lipid IVA). The protein is Tetraacyldisaccharide 4'-kinase of Pseudomonas putida (strain GB-1).